The sequence spans 193 residues: dCTP deaminase, dUMP-forming (193 aa).

DCTP-binding positions include lysine 101–arginine 106, aspartate 119, threonine 127–glutamate 129, glutamine 148, tyrosine 162, and glutamine 174. The active-site Proton donor/acceptor is the glutamate 129. Residues proline 161–glutamine 184 form a disordered region.

The protein belongs to the dCTP deaminase family. Homotrimer.

The enzyme catalyses dCTP + 2 H2O = dUMP + NH4(+) + diphosphate. Its pathway is pyrimidine metabolism; dUMP biosynthesis; dUMP from dCTP: step 1/1. Functionally, bifunctional enzyme that catalyzes both the deamination of dCTP to dUTP and the hydrolysis of dUTP to dUMP without releasing the toxic dUTP intermediate. The chain is dCTP deaminase, dUMP-forming from Bifidobacterium animalis subsp. lactis (strain AD011).